Reading from the N-terminus, the 302-residue chain is Ribosomal RNA small subunit methyltransferase A (302 aa).

6 residues coordinate S-adenosyl-L-methionine: Asn-27, Leu-29, Gly-54, Glu-75, Asp-100, and Asn-138.

This sequence belongs to the class I-like SAM-binding methyltransferase superfamily. rRNA adenine N(6)-methyltransferase family. RsmA subfamily.

The protein resides in the cytoplasm. It carries out the reaction adenosine(1518)/adenosine(1519) in 16S rRNA + 4 S-adenosyl-L-methionine = N(6)-dimethyladenosine(1518)/N(6)-dimethyladenosine(1519) in 16S rRNA + 4 S-adenosyl-L-homocysteine + 4 H(+). In terms of biological role, specifically dimethylates two adjacent adenosines (A1518 and A1519) in the loop of a conserved hairpin near the 3'-end of 16S rRNA in the 30S particle. May play a critical role in biogenesis of 30S subunits. This Natranaerobius thermophilus (strain ATCC BAA-1301 / DSM 18059 / JW/NM-WN-LF) protein is Ribosomal RNA small subunit methyltransferase A.